Reading from the N-terminus, the 308-residue chain is HPr kinase/phosphorylase (308 aa).

Active-site residues include histidine 138 and lysine 159. Position 153–160 (153–160) interacts with ATP; sequence GESGLGKS. Serine 160 is a Mg(2+) binding site. Aspartate 177 serves as the catalytic Proton acceptor; for phosphorylation activity. Proton donor; for dephosphorylation activity. Residues 201 to 210 form an important for the catalytic mechanism of both phosphorylation and dephosphorylation region; it reads LEVRGLGLLD. Glutamate 202 serves as a coordination point for Mg(2+). Residue arginine 243 is part of the active site. The important for the catalytic mechanism of dephosphorylation stretch occupies residues 264-269; sequence QVAAGR.

It belongs to the HPrK/P family. Homohexamer. Mg(2+) is required as a cofactor.

The catalysed reaction is [HPr protein]-L-serine + ATP = [HPr protein]-O-phospho-L-serine + ADP + H(+). It catalyses the reaction [HPr protein]-O-phospho-L-serine + phosphate + H(+) = [HPr protein]-L-serine + diphosphate. Functionally, catalyzes the ATP- as well as the pyrophosphate-dependent phosphorylation of a specific serine residue in HPr, a phosphocarrier protein of the phosphoenolpyruvate-dependent sugar phosphotransferase system (PTS). HprK/P also catalyzes the pyrophosphate-producing, inorganic phosphate-dependent dephosphorylation (phosphorolysis) of seryl-phosphorylated HPr (P-Ser-HPr). The chain is HPr kinase/phosphorylase from Bordetella bronchiseptica (strain ATCC BAA-588 / NCTC 13252 / RB50) (Alcaligenes bronchisepticus).